Here is a 422-residue protein sequence, read N- to C-terminus: Histidine--tRNA ligase (422 aa).

The protein belongs to the class-II aminoacyl-tRNA synthetase family. As to quaternary structure, homodimer.

The protein resides in the cytoplasm. The enzyme catalyses tRNA(His) + L-histidine + ATP = L-histidyl-tRNA(His) + AMP + diphosphate + H(+). The chain is Histidine--tRNA ligase from Vibrio vulnificus (strain CMCP6).